The chain runs to 451 residues: Adenylyltransferase and sulfurtransferase MOCS3-2 (451 aa).

The tract at residues 42-62 (GEDSDEAEESSNDMPTPQTKL) is disordered. Residues 43–52 (EDSDEAEESS) are compositionally biased toward acidic residues. A Phosphothreonine modification is found at Thr-60. ATP-binding positions include Gly-99, Asp-120, 127–131 (SNLHR), Lys-144, and 188–189 (DN). Residues Cys-229 and Cys-232 each coordinate Zn(2+). The Glycyl thioester intermediate; for adenylyltransferase activity role is filled by Cys-246. Cys-304 and Cys-307 together coordinate Zn(2+). One can recognise a Rhodanese domain in the interval 353-449 (QSQPHLLLDV…WTGSVDATFP (97 aa)). Cys-408 functions as the Cysteine persulfide intermediate; for sulfurtransferase activity in the catalytic mechanism.

In the N-terminal section; belongs to the HesA/MoeB/ThiF family. UBA4 subfamily. It depends on Zn(2+) as a cofactor.

The protein localises to the cytoplasm. The enzyme catalyses [molybdopterin-synthase sulfur-carrier protein]-C-terminal Gly-Gly + ATP + H(+) = [molybdopterin-synthase sulfur-carrier protein]-C-terminal Gly-Gly-AMP + diphosphate. It catalyses the reaction [molybdopterin-synthase sulfur-carrier protein]-C-terminal Gly-Gly-AMP + S-sulfanyl-L-cysteinyl-[cysteine desulfurase] + AH2 = [molybdopterin-synthase sulfur-carrier protein]-C-terminal-Gly-aminoethanethioate + L-cysteinyl-[cysteine desulfurase] + A + AMP + 2 H(+). It participates in tRNA modification; 5-methoxycarbonylmethyl-2-thiouridine-tRNA biosynthesis. It functions in the pathway cofactor biosynthesis; molybdopterin biosynthesis. In terms of biological role, plays a central role in 2-thiolation of mcm(5)S(2)U at tRNA wobble positions of cytosolic tRNA(Lys), tRNA(Glu) and tRNA(Gln). Also essential during biosynthesis of the molybdenum cofactor. Acts by mediating the C-terminal thiocarboxylation of sulfur carriers URM1 and MOCS2A. Its N-terminus first activates URM1 and MOCS2A as acyl-adenylates (-COAMP), then the persulfide sulfur on the catalytic cysteine is transferred to URM1 and MOCS2A to form thiocarboxylation (-COSH) of their C-terminus. The reaction probably involves hydrogen sulfide that is generated from the persulfide intermediate and that acts as a nucleophile towards URM1 and MOCS2A. Subsequently, a transient disulfide bond is formed. Does not use thiosulfate as sulfur donor; NFS1 probably acting as a sulfur donor for thiocarboxylation reactions. In Drosophila pseudoobscura pseudoobscura (Fruit fly), this protein is Adenylyltransferase and sulfurtransferase MOCS3-2.